The chain runs to 182 residues: Probable RNA 2'-phosphotransferase (182 aa).

It belongs to the KptA/TPT1 family.

In terms of biological role, removes the 2'-phosphate from RNA via an intermediate in which the phosphate is ADP-ribosylated by NAD followed by a presumed transesterification to release the RNA and generate ADP-ribose 1''-2''-cyclic phosphate (APPR&gt;P). May function as an ADP-ribosylase. This Pseudomonas fluorescens (strain ATCC BAA-477 / NRRL B-23932 / Pf-5) protein is Probable RNA 2'-phosphotransferase.